The sequence spans 492 residues: Protein nucleotidyltransferase YdiU (492 aa).

Residues Gly88, Gly90, Arg91, Lys111, Asp123, Gly124, Arg174, and Arg181 each contribute to the ATP site. Asp250 (proton acceptor) is an active-site residue. The Mg(2+) site is built by Asn251 and Asp260. Asp260 contributes to the ATP binding site.

This sequence belongs to the SELO family. Requires Mg(2+) as cofactor. It depends on Mn(2+) as a cofactor.

The enzyme catalyses L-seryl-[protein] + ATP = 3-O-(5'-adenylyl)-L-seryl-[protein] + diphosphate. It catalyses the reaction L-threonyl-[protein] + ATP = 3-O-(5'-adenylyl)-L-threonyl-[protein] + diphosphate. It carries out the reaction L-tyrosyl-[protein] + ATP = O-(5'-adenylyl)-L-tyrosyl-[protein] + diphosphate. The catalysed reaction is L-histidyl-[protein] + UTP = N(tele)-(5'-uridylyl)-L-histidyl-[protein] + diphosphate. The enzyme catalyses L-seryl-[protein] + UTP = O-(5'-uridylyl)-L-seryl-[protein] + diphosphate. It catalyses the reaction L-tyrosyl-[protein] + UTP = O-(5'-uridylyl)-L-tyrosyl-[protein] + diphosphate. Its function is as follows. Nucleotidyltransferase involved in the post-translational modification of proteins. It can catalyze the addition of adenosine monophosphate (AMP) or uridine monophosphate (UMP) to a protein, resulting in modifications known as AMPylation and UMPylation. The chain is Protein nucleotidyltransferase YdiU from Rhodopseudomonas palustris (strain ATCC BAA-98 / CGA009).